The primary structure comprises 447 residues: Tryptophan synthase beta chain (447 aa).

Lys92 is modified (N6-(pyridoxal phosphate)lysine). Residues 408 to 447 (GLAVKGGEQPKEFSDGPPLGKLAPSGGSAVREATSVGARK) are disordered.

It belongs to the TrpB family. In terms of assembly, tetramer of two alpha and two beta chains. It depends on pyridoxal 5'-phosphate as a cofactor.

The enzyme catalyses (1S,2R)-1-C-(indol-3-yl)glycerol 3-phosphate + L-serine = D-glyceraldehyde 3-phosphate + L-tryptophan + H2O. It functions in the pathway amino-acid biosynthesis; L-tryptophan biosynthesis; L-tryptophan from chorismate: step 5/5. Its function is as follows. The beta subunit is responsible for the synthesis of L-tryptophan from indole and L-serine. The polypeptide is Tryptophan synthase beta chain (Polaromonas sp. (strain JS666 / ATCC BAA-500)).